Consider the following 614-residue polypeptide: High-affinity choline transporter 1 (614 aa).

The helical transmembrane segment at 6-26 (GVVSIVLFYLLILVVGIWAGR) threads the bilayer. The Cytoplasmic segment spans residues 27 to 44 (KKQSGNDSEEEVMLAGRS). A helical membrane pass occupies residues 45–65 (IGLFVGIFTMTATWVGGGYIN). The Extracellular segment spans residues 66-75 (GTAEAIYTSG). A helical transmembrane segment spans residues 76–96 (LVWCQAPFGYALSLVFGGIFF). The Cytoplasmic portion of the chain corresponds to 97-119 (ANPMRKQGYITMLDPLQDSFGER). A helical membrane pass occupies residues 120-140 (MGGLLFLPALCGEVFWAAGIL). Over 141-158 (AALGATLSVIIDMDHRTS) the chain is Extracellular. A helical transmembrane segment spans residues 159-179 (VILSSCIAIFYTLFGGLYSVA). Residues 180 to 185 (YTDVIQ) lie on the Cytoplasmic side of the membrane. The helical transmembrane segment at 186-206 (LFCIFIGLWMCIPFAWSNEHV) threads the bilayer. Residues 207 to 225 (GSLSDLEVDWIGHVEPKKH) are Extracellular-facing. A helical membrane pass occupies residues 226-246 (WLYIDYGLLLVFGGIPWQVYF). The Cytoplasmic portion of the chain corresponds to 247 to 262 (QRVLSSKTAGRAQLLS). The chain crosses the membrane as a helical span at residues 263–283 (YVAAAGCILMAIPPVLIGAIA). At 284–305 (KATPWNETDYKGPYPLTVDETS) the chain is on the extracellular side. N-linked (GlcNAc...) asparagine glycosylation is present at asparagine 289. Residues 306-326 (MILPMVLQYLTPDFVSFFGLG) traverse the membrane as a helical segment. Residues 327–364 (AVSAAVMSSADSSVLSAASMFARNVYKLIFRQKASEME) are Cytoplasmic-facing. Residues 365–385 (IIWVMRVAIIVVGILATIMAL) form a helical membrane-spanning segment. The Extracellular segment spans residues 386–394 (TIPSIYGLW). Residues 395 to 415 (SMCSDLVYVILFPQLLMVVHF) form a helical membrane-spanning segment. The Cytoplasmic segment spans residues 416–424 (KKHCNTYGS). A helical membrane pass occupies residues 425-445 (LSAYIVALAIRLSGGEAILGL). Residues 446–467 (APLIKYPGYDEETKEQMFPFRT) lie on the Extracellular side of the membrane. The helical transmembrane segment at 468-488 (MAMLLSLVTLISVSWWTKMMF) threads the bilayer. Residues 489–614 (ESGKLPPSYD…PTAEQDNTAF (126 aa)) are Cytoplasmic-facing. Positions 583–614 (ATGVKPSGGGGGHLQSQSGMAMPTAEQDNTAF) are disordered.

It belongs to the sodium:solute symporter (SSF) (TC 2.A.21) family.

The protein localises to the membrane. Functionally, imports choline from the extracellular space to the neuron with high affinity. Rate-limiting step in acetylcholine synthesis. Sodium ion and chloride ion dependent. This chain is High-affinity choline transporter 1, found in Drosophila melanogaster (Fruit fly).